The sequence spans 311 residues: Sulfate adenylyltransferase subunit 2 (311 aa).

Belongs to the PAPS reductase family. CysD subfamily. As to quaternary structure, heterodimer composed of CysD, the smaller subunit, and CysN.

The enzyme catalyses sulfate + ATP + H(+) = adenosine 5'-phosphosulfate + diphosphate. It participates in sulfur metabolism; hydrogen sulfide biosynthesis; sulfite from sulfate: step 1/3. Its function is as follows. With CysN forms the ATP sulfurylase (ATPS) that catalyzes the adenylation of sulfate producing adenosine 5'-phosphosulfate (APS) and diphosphate, the first enzymatic step in sulfur assimilation pathway. APS synthesis involves the formation of a high-energy phosphoric-sulfuric acid anhydride bond driven by GTP hydrolysis by CysN coupled to ATP hydrolysis by CysD. This Methylobacterium sp. (strain 4-46) protein is Sulfate adenylyltransferase subunit 2.